A 143-amino-acid chain; its full sequence is Hemoglobin subunit alpha-2 (143 aa).

Position 2 is an N-acetylserine (Ser-2). A Globin domain is found at 2 to 143; that stretch reads SLTEKDKAAV…LSLALAEKYR (142 aa). His-60 serves as a coordination point for O2. His-89 lines the heme b pocket.

This sequence belongs to the globin family. As to quaternary structure, hb2 is a heterotetramer of two alpha-2 chains and two beta-1 chains; Hb3 is a heterotetramer of two alpha-2 chains and two beta-2 chains. Red blood cells.

Functionally, involved in oxygen transport from gills to the various peripheral tissues. In Anarhichas minor (Arctic spotted wolffish), this protein is Hemoglobin subunit alpha-2 (hba2).